We begin with the raw amino-acid sequence, 305 residues long: tRNA-splicing endonuclease (305 aa).

Active-site residues include Tyr-246, His-257, and Lys-287.

It belongs to the tRNA-intron endonuclease family. Archaeal long subfamily. Homodimer.

It catalyses the reaction pretRNA = a 3'-half-tRNA molecule with a 5'-OH end + a 5'-half-tRNA molecule with a 2',3'-cyclic phosphate end + an intron with a 2',3'-cyclic phosphate and a 5'-hydroxyl terminus.. In terms of biological role, endonuclease that removes tRNA introns. Cleaves pre-tRNA at the 5'- and 3'-splice sites to release the intron. The products are an intron and two tRNA half-molecules bearing 2',3' cyclic phosphate and 5'-OH termini. Recognizes a pseudosymmetric substrate in which 2 bulged loops of 3 bases are separated by a stem of 4 bp. The protein is tRNA-splicing endonuclease of Archaeoglobus fulgidus (strain ATCC 49558 / DSM 4304 / JCM 9628 / NBRC 100126 / VC-16).